A 74-amino-acid chain; its full sequence is uncharacterized protein (74 aa).

This is an uncharacterized protein from Salmonella typhimurium.